The chain runs to 259 residues: MLSKRIIPCLDVRAGRLTKGVKFEGNVDIGDPVATARRYYEEGADEIVFYDITASHEDRGIFLDVVERVASEIFIPFSVGGGINTVDDMRAVLMAGAEKVSVNSGAVKTPDIISQGAAAFGSQAIVVGMDVKQVEKSATIPSGYEIVIHGGRKYMGMDAIEWAKTCESLGAGELCVNSIDADGTKDGYELTLTRMISDAVTIPVIASGGAGSPEHMYDALTRGGASAALIASIVHYGTYTIPDLKRRISGMGAKMRMVW.

Residues D11 and D130 contribute to the active site.

The protein belongs to the HisA/HisF family. Heterodimer of HisH and HisF.

The protein resides in the cytoplasm. It carries out the reaction 5-[(5-phospho-1-deoxy-D-ribulos-1-ylimino)methylamino]-1-(5-phospho-beta-D-ribosyl)imidazole-4-carboxamide + L-glutamine = D-erythro-1-(imidazol-4-yl)glycerol 3-phosphate + 5-amino-1-(5-phospho-beta-D-ribosyl)imidazole-4-carboxamide + L-glutamate + H(+). The protein operates within amino-acid biosynthesis; L-histidine biosynthesis; L-histidine from 5-phospho-alpha-D-ribose 1-diphosphate: step 5/9. IGPS catalyzes the conversion of PRFAR and glutamine to IGP, AICAR and glutamate. The HisF subunit catalyzes the cyclization activity that produces IGP and AICAR from PRFAR using the ammonia provided by the HisH subunit. The sequence is that of Imidazole glycerol phosphate synthase subunit HisF from Nitratidesulfovibrio vulgaris (strain DP4) (Desulfovibrio vulgaris).